We begin with the raw amino-acid sequence, 163 residues long: SsrA-binding protein (163 aa).

It belongs to the SmpB family.

The protein resides in the cytoplasm. Its function is as follows. Required for rescue of stalled ribosomes mediated by trans-translation. Binds to transfer-messenger RNA (tmRNA), required for stable association of tmRNA with ribosomes. tmRNA and SmpB together mimic tRNA shape, replacing the anticodon stem-loop with SmpB. tmRNA is encoded by the ssrA gene; the 2 termini fold to resemble tRNA(Ala) and it encodes a 'tag peptide', a short internal open reading frame. During trans-translation Ala-aminoacylated tmRNA acts like a tRNA, entering the A-site of stalled ribosomes, displacing the stalled mRNA. The ribosome then switches to translate the ORF on the tmRNA; the nascent peptide is terminated with the 'tag peptide' encoded by the tmRNA and targeted for degradation. The ribosome is freed to recommence translation, which seems to be the essential function of trans-translation. The chain is SsrA-binding protein from Shewanella sp. (strain ANA-3).